Consider the following 885-residue polypeptide: Envelope glycoprotein gp160 (885 aa).

An N-terminal signal peptide occupies residues 1–23 (MGCLGNQLLIALLLVSVLEICCV). Over 24-700 (QYVTVFYGVP…TSWIRYIQYG (677 aa)) the chain is Extracellular. An N-linked (GlcNAc...) asparagine; by host glycan is attached at Asn-37. Residues Cys-44 and Cys-57 are joined by a disulfide bond. Residues Asn-70, Asn-114, Asn-148, Asn-156, Asn-173, Asn-186, Asn-201, Asn-213, Asn-245, Asn-255, Asn-279, Asn-285, Asn-296, Asn-307, Asn-317, Asn-372, and Asn-378 are each glycosylated (N-linked (GlcNAc...) asparagine; by host). 5 disulfides stabilise this stretch: Cys-101-Cys-221, Cys-108-Cys-212, Cys-113-Cys-170, Cys-234-Cys-264, and Cys-244-Cys-256. The tract at residues 113-169 (CNKTETDRWGLTGNAGTTTTAITTTATPSVAENVINESNPCIKNNSCAGLEQEPMIG) is V1. Residues 170–212 (CKFNMTGLNRDKKKEYNETWYSRDLICEQSANESESKCYMHHC) form a V2 region. The segment at 312–344 (CRRPENKTVLPVTIMSGLVFHSQPINERPKQAW) is V3. Cys-312 and Cys-345 are disulfide-bonded. 2 cysteine pairs are disulfide-bonded: Cys-396-Cys-465 and Cys-403-Cys-438. Residues 403–438 (CKMNWFLNWVEDRDQKGGRWKQQNRKEQQKKNYVPC) are V4. N-linked (GlcNAc...) asparagine; by host glycans are attached at residues Asn-466, Asn-482, and Asn-485. Positions 481-488 (SNETNITM) are V5. The segment at 532–552 (GVFVLGFLGFLATAGSAMGAA) is fusion peptide. The immunosuppression stretch occupies residues 595-611 (LQTRVTAIEKYLKDQAQ). N-linked (GlcNAc...) asparagine; by host glycosylation is found at Asn-631, Asn-640, and Asn-656. A coiled-coil region spans residues 640 to 672 (NMTWQEWERQVDFLEANITQLLEEAQIQQEKNM). Residues 677–698 (KLNSWDIFGNWFDLTSWIRYIQ) are MPER; binding to GalCer. A helical membrane pass occupies residues 701–721 (VLIVLGVIGLRIVIYVVQMLA). Residues 722–885 (RLRQGYRPVF…IRQGLELTLL (164 aa)) lie on the Cytoplasmic side of the membrane. The YXXV motif; contains endocytosis signal motif lies at 727–730 (YRPV). A disordered region spans residues 743-764 (IHKGQEPPTKEGEEGDGGDRGG). Residues 745-764 (KGQEPPTKEGEEGDGGDRGG) show a composition bias toward basic and acidic residues. The S-palmitoyl cysteine; by host moiety is linked to residue Cys-793. A Di-leucine internalization motif motif is present at residues 884-885 (LL).

The mature envelope protein (Env) consists of a homotrimer of non-covalently associated gp120-gp41 heterodimers. The resulting complex protrudes from the virus surface as a spike. Interacts with host CD4 and CCR5. Gp120 also interacts with the C-type lectins CD209/DC-SIGN and CLEC4M/DC-SIGNR (collectively referred to as DC-SIGN(R)). As to quaternary structure, the mature envelope protein (Env) consists of a homotrimer of non-covalently associated gp120-gp41 heterodimers. The resulting complex protrudes from the virus surface as a spike. In terms of processing, specific enzymatic cleavages in vivo yield mature proteins. Envelope glycoproteins are synthesized as an inactive precursor that is heavily N-glycosylated and processed likely by host cell furin in the Golgi to yield the mature SU and TM proteins. The cleavage site between SU and TM requires the minimal sequence [KR]-X-[KR]-R. Post-translationally, palmitoylation of the transmembrane protein and of Env polyprotein (prior to its proteolytic cleavage) is essential for their association with host cell membrane lipid rafts. Palmitoylation is therefore required for envelope trafficking to classical lipid rafts, but not for viral replication.

The protein resides in the virion membrane. The protein localises to the host cell membrane. It is found in the host endosome membrane. In terms of biological role, the surface protein gp120 (SU) attaches the virus to the host lymphoid cell by binding to the primary receptor CD4. This interaction induces a structural rearrangement creating a high affinity binding site for a chemokine coreceptor like CCR5. This peculiar 2 stage receptor-interaction strategy allows gp120 to maintain the highly conserved coreceptor-binding site in a cryptic conformation, protected from neutralizing antibodies. These changes are transmitted to the transmembrane protein gp41 and are thought to activate its fusogenic potential by unmasking its fusion peptide. Its function is as follows. Surface protein gp120 (SU) may target the virus to gut-associated lymphoid tissue (GALT) by binding host ITGA4/ITGB7 (alpha-4/beta-7 integrins), a complex that mediates T-cell migration to the GALT. Interaction between gp120 and ITGA4/ITGB7 would allow the virus to enter GALT early in the infection, infecting and killing most of GALT's resting CD4+ T-cells. This T-cell depletion is believed to be the major insult to the host immune system leading to AIDS. The surface protein gp120 is a ligand for CD209/DC-SIGN and CLEC4M/DC-SIGNR, which are respectively found on dendritic cells (DCs), and on endothelial cells of liver sinusoids and lymph node sinuses. These interactions allow capture of viral particles at mucosal surfaces by these cells and subsequent transmission to permissive cells. DCs are professional antigen presenting cells, critical for host immunity by inducing specific immune responses against a broad variety of pathogens. They act as sentinels in various tissues where they take up antigen, process it, and present it to T-cells following migration to lymphoid organs. SIV subverts the migration properties of dendritic cells to gain access to CD4+ T-cells in lymph nodes. Virus transmission to permissive T-cells occurs either in trans (without DCs infection, through viral capture and transmission), or in cis (following DCs productive infection, through the usual CD4-gp120 interaction), thereby inducing a robust infection. In trans infection, bound virions remain infectious over days and it is proposed that they are not degraded, but protected in non-lysosomal acidic organelles within the DCs close to the cell membrane thus contributing to the viral infectious potential during DCs' migration from the periphery to the lymphoid tissues. On arrival at lymphoid tissues, intact virions recycle back to DCs' cell surface allowing virus transmission to CD4+ T-cells. Virion capture also seems to lead to MHC-II-restricted viral antigen presentation, and probably to the activation of SIV-specific CD4+ cells. Functionally, the transmembrane protein gp41 (TM) acts as a class I viral fusion protein. Under the current model, the protein has at least 3 conformational states: pre-fusion native state, pre-hairpin intermediate state, and post-fusion hairpin state. During fusion of viral and target intracellular membranes, the coiled coil regions (heptad repeats) assume a trimer-of-hairpins structure, positioning the fusion peptide in close proximity to the C-terminal region of the ectodomain. The formation of this structure appears to drive apposition and subsequent fusion of viral and target cell membranes. Complete fusion occurs in host cell endosomes. The virus undergoes clathrin-dependent internalization long before endosomal fusion, thus minimizing the surface exposure of conserved viral epitopes during fusion and reducing the efficacy of inhibitors targeting these epitopes. Membranes fusion leads to delivery of the nucleocapsid into the cytoplasm. In terms of biological role, the envelope glycoprotein gp160 precursor down-modulates cell surface CD4 antigen by interacting with it in the endoplasmic reticulum and blocking its transport to the cell surface. Its function is as follows. The gp120-gp41 heterodimer allows rapid transcytosis of the virus through CD4 negative cells such as simple epithelial monolayers of the intestinal, rectal and endocervical epithelial barriers. Both gp120 and gp41 specifically recognize glycosphingolipids galactosyl-ceramide (GalCer) or 3' sulfo-galactosyl-ceramide (GalS) present in the lipid rafts structures of epithelial cells. Binding to these alternative receptors allows the rapid transcytosis of the virus through the epithelial cells. This transcytotic vesicle-mediated transport of virions from the apical side to the basolateral side of the epithelial cells does not involve infection of the cells themselves. The protein is Envelope glycoprotein gp160 (env) of Cercopithecidae (Old World monkeys).